A 396-amino-acid polypeptide reads, in one-letter code: Ubiquitin-like modifier-activating enzyme 5 (396 aa).

5 residues coordinate ATP: Gly-76, Asp-97, Lys-120, Asn-143, and Asn-177. Residues Cys-219 and Cys-222 each coordinate Zn(2+). The active-site Glycyl thioester intermediate is the Cys-243. Positions 296 and 301 each coordinate Zn(2+).

The protein belongs to the ubiquitin-activating E1 family. UBA5 subfamily.

E1-like enzyme which activates UFM1. The sequence is that of Ubiquitin-like modifier-activating enzyme 5 from Drosophila ananassae (Fruit fly).